Reading from the N-terminus, the 396-residue chain is 1-deoxy-D-xylulose 5-phosphate reductoisomerase (396 aa).

Residues threonine 10, glycine 11, serine 12, isoleucine 13, and asparagine 123 each contribute to the NADPH site. Lysine 124 contributes to the 1-deoxy-D-xylulose 5-phosphate binding site. Glutamate 125 contacts NADPH. Aspartate 149 lines the Mn(2+) pocket. Serine 150, glutamate 151, serine 185, and histidine 208 together coordinate 1-deoxy-D-xylulose 5-phosphate. Glutamate 151 provides a ligand contact to Mn(2+). Glycine 214 is an NADPH binding site. Residues serine 221, asparagine 226, lysine 227, and glutamate 230 each coordinate 1-deoxy-D-xylulose 5-phosphate. Glutamate 230 is a Mn(2+) binding site.

Belongs to the DXR family. Mg(2+) serves as cofactor. Mn(2+) is required as a cofactor.

It carries out the reaction 2-C-methyl-D-erythritol 4-phosphate + NADP(+) = 1-deoxy-D-xylulose 5-phosphate + NADPH + H(+). It participates in isoprenoid biosynthesis; isopentenyl diphosphate biosynthesis via DXP pathway; isopentenyl diphosphate from 1-deoxy-D-xylulose 5-phosphate: step 1/6. In terms of biological role, catalyzes the NADPH-dependent rearrangement and reduction of 1-deoxy-D-xylulose-5-phosphate (DXP) to 2-C-methyl-D-erythritol 4-phosphate (MEP). This is 1-deoxy-D-xylulose 5-phosphate reductoisomerase from Shewanella frigidimarina (strain NCIMB 400).